Reading from the N-terminus, the 383-residue chain is 8-amino-7-oxononanoate synthase (383 aa).

Residue Arg-22 participates in substrate binding. Gly-109–Phe-110 serves as a coordination point for pyridoxal 5'-phosphate. His-134 serves as a coordination point for substrate. Residues Ser-178, His-206, and Thr-232 each coordinate pyridoxal 5'-phosphate. Lys-235 bears the N6-(pyridoxal phosphate)lysine mark. Thr-348 serves as a coordination point for substrate.

This sequence belongs to the class-II pyridoxal-phosphate-dependent aminotransferase family. BioF subfamily. Homodimer. It depends on pyridoxal 5'-phosphate as a cofactor.

The enzyme catalyses 6-carboxyhexanoyl-[ACP] + L-alanine + H(+) = (8S)-8-amino-7-oxononanoate + holo-[ACP] + CO2. Its pathway is cofactor biosynthesis; biotin biosynthesis. In terms of biological role, catalyzes the decarboxylative condensation of pimeloyl-[acyl-carrier protein] and L-alanine to produce 8-amino-7-oxononanoate (AON), [acyl-carrier protein], and carbon dioxide. The polypeptide is 8-amino-7-oxononanoate synthase (Vibrio campbellii (strain ATCC BAA-1116)).